We begin with the raw amino-acid sequence, 180 residues long: ATP-dependent protease subunit HslV (180 aa).

Residue Thr6 is part of the active site. The Na(+) site is built by Ala164, Cys167, and Thr170.

It belongs to the peptidase T1B family. HslV subfamily. A double ring-shaped homohexamer of HslV is capped on each side by a ring-shaped HslU homohexamer. The assembly of the HslU/HslV complex is dependent on binding of ATP.

It is found in the cytoplasm. The catalysed reaction is ATP-dependent cleavage of peptide bonds with broad specificity.. Its activity is regulated as follows. Allosterically activated by HslU binding. In terms of biological role, protease subunit of a proteasome-like degradation complex believed to be a general protein degrading machinery. The sequence is that of ATP-dependent protease subunit HslV from Borrelia hermsii (strain HS1 / DAH).